We begin with the raw amino-acid sequence, 443 residues long: Tol-Pal system protein TolB (443 aa).

The first 33 residues, 1–33, serve as a signal peptide directing secretion; sequence MKIGIINTKIRTVFSAFACMIAASLVCTMPARA.

The protein belongs to the TolB family. In terms of assembly, the Tol-Pal system is composed of five core proteins: the inner membrane proteins TolA, TolQ and TolR, the periplasmic protein TolB and the outer membrane protein Pal. They form a network linking the inner and outer membranes and the peptidoglycan layer.

The protein resides in the periplasm. In terms of biological role, part of the Tol-Pal system, which plays a role in outer membrane invagination during cell division and is important for maintaining outer membrane integrity. The chain is Tol-Pal system protein TolB from Brucella ovis (strain ATCC 25840 / 63/290 / NCTC 10512).